A 387-amino-acid chain; its full sequence is Putative transposase y4pF/y4sB (387 aa).

The protein belongs to the transposase 20 family.

This is Putative transposase y4pF/y4sB from Sinorhizobium fredii (strain NBRC 101917 / NGR234).